Here is a 332-residue protein sequence, read N- to C-terminus: Ferredoxin--NADP reductase 1 (332 aa).

FAD-binding residues include D35, K43, F48, V88, F123, D284, and T325.

The protein belongs to the ferredoxin--NADP reductase type 2 family. As to quaternary structure, homodimer. FAD serves as cofactor.

The enzyme catalyses 2 reduced [2Fe-2S]-[ferredoxin] + NADP(+) + H(+) = 2 oxidized [2Fe-2S]-[ferredoxin] + NADPH. The protein is Ferredoxin--NADP reductase 1 of Listeria monocytogenes serovar 1/2a (strain ATCC BAA-679 / EGD-e).